A 150-amino-acid polypeptide reads, in one-letter code: MKVVVQRVKEASVTNDTLNNQIKKGYCLLVGIGQNSTEQDADVIAKKIANARLFEDDNNKLNFNIQQMNGEILSVSQFTLYADVKKGNRPGFSNSKNPDQAVKIYEYFNDALRAYGLTVKTGEFGTHMNVSINNDGPVTIIYESQDGKIQ.

Residues 136–137 carry the Gly-cisPro motif, important for rejection of L-amino acids motif; it reads GP.

This sequence belongs to the DTD family. As to quaternary structure, homodimer.

Its subcellular location is the cytoplasm. The enzyme catalyses glycyl-tRNA(Ala) + H2O = tRNA(Ala) + glycine + H(+). It catalyses the reaction a D-aminoacyl-tRNA + H2O = a tRNA + a D-alpha-amino acid + H(+). An aminoacyl-tRNA editing enzyme that deacylates mischarged D-aminoacyl-tRNAs. Also deacylates mischarged glycyl-tRNA(Ala), protecting cells against glycine mischarging by AlaRS. Acts via tRNA-based rather than protein-based catalysis; rejects L-amino acids rather than detecting D-amino acids in the active site. By recycling D-aminoacyl-tRNA to D-amino acids and free tRNA molecules, this enzyme counteracts the toxicity associated with the formation of D-aminoacyl-tRNA entities in vivo and helps enforce protein L-homochirality. The chain is D-aminoacyl-tRNA deacylase from Staphylococcus aureus (strain Mu50 / ATCC 700699).